We begin with the raw amino-acid sequence, 570 residues long: Periplasmic trehalase (570 aa).

The N-terminal stretch at methionine 1–alanine 34 is a signal peptide. Substrate contacts are provided by residues arginine 157, tryptophan 164 to aspartate 165, asparagine 201, arginine 210 to glutamine 212, arginine 282 to glutamate 284, and glycine 315. Residues aspartate 317 and glutamate 501 each act as proton donor/acceptor in the active site. Glutamate 516 contributes to the substrate binding site. Positions lysine 542–proline 570 are disordered. The span at proline 552–proline 570 shows a compositional bias: low complexity.

The protein belongs to the glycosyl hydrolase 37 family. In terms of assembly, monomer.

It is found in the periplasm. It carries out the reaction alpha,alpha-trehalose + H2O = alpha-D-glucose + beta-D-glucose. Provides the cells with the ability to utilize trehalose at high osmolarity by splitting it into glucose molecules that can subsequently be taken up by the phosphotransferase-mediated uptake system. The sequence is that of Periplasmic trehalase from Citrobacter koseri (strain ATCC BAA-895 / CDC 4225-83 / SGSC4696).